The sequence spans 239 residues: Ribosomal RNA small subunit methyltransferase G (239 aa).

S-adenosyl-L-methionine-binding positions include G78, F83, 129–130 (AE), and R148.

It belongs to the methyltransferase superfamily. RNA methyltransferase RsmG family.

It is found in the cytoplasm. In terms of biological role, specifically methylates the N7 position of a guanine in 16S rRNA. This is Ribosomal RNA small subunit methyltransferase G from Clostridium botulinum (strain 657 / Type Ba4).